Reading from the N-terminus, the 367-residue chain is Putative F-box/kelch-repeat protein At4g39600 (367 aa).

In terms of domain architecture, F-box spans alanine 11–arginine 57. 2 Kelch repeats span residues histidine 127 to lysine 171 and methionine 172 to isoleucine 216.

The protein is Putative F-box/kelch-repeat protein At4g39600 of Arabidopsis thaliana (Mouse-ear cress).